Consider the following 208-residue polypeptide: Ectodysplasin-A receptor-associated adapter protein (208 aa).

The span at 1 to 18 shows a compositional bias: basic and acidic residues; the sequence is MASPDDPLRSDHMAKEPV. The interval 1-99 is disordered; the sequence is MASPDDPLRS…KGSCSCPSCS (99 aa). Residues 49-61 show a composition bias toward polar residues; sequence TVNSNCPPNSDDQ. The Death domain maps to 116 to 195; sequence DTIRIKLDPC…KILRRWVDEE (80 aa).

In terms of assembly, binds EDAR. Self-associates and binds TRAF1, TRAF2 and TRAF3.

Its subcellular location is the cytoplasm. In terms of biological role, adapter protein that interacts with EDAR DEATH domain and couples the receptor to EDA signaling pathway during morphogenesis of ectodermal organs. Mediates the activation of NF-kappa-B. The protein is Ectodysplasin-A receptor-associated adapter protein (Edaradd) of Mus musculus (Mouse).